Reading from the N-terminus, the 899-residue chain is MKLSPPASADMPQALPENDGEQRCLNSELWHACAGPLVSLPVVRSRVVYFPQGHSEQVAASTNKEVDAQIPNYPNLPPQLICQLHNVTMHADAETDEVYAQMTLQPLSPEEQKEPFLPMELGAASKQPTNYFCKTLTASDTSTHGGFSVPRRAAEKVFPPLDFSQQPPAQELIARDLHDNEWKFRHIFRGQPKRHLLTTGWSVFVSAKRLVAGDSVIFIWNDNNQLLLGIRRANRQQTVMPSSVLSSDSMHIGLLAAAAHAAATNSRFTIFYNPRASPSEFVIPLAKYVKAVYHTRVSVGMRFRMLFETEESSVRRYMGTITSISDLDSVRWPNSHWRSVKVGWDESTTGDKQPRVSLWEIEPLTTFPMYPSAFPLRLKRPWASGLPMHGMFNGGGNDDFARYSSLMWLRDGNRGTQSLNFQGHGVSPWLQPRIDSPLLGLKPDTYQQMAAAALEEIRYGDPSKQHPATLQYQQTHNLNSGLNSLFASHVLGQVQFQPQQSPLQVVQQGHCQNTGDSGFLQGQLPRLQLHNTQQLLKEQELQQQQRQHVLQEQSSQEMQQQLPSSDHHVADVASESGSAPQAQSSLLSGSSFYNQNLLEGNSDPPLHLHNNFHNFSNQEASNLLILPRSSQLMASDGWPSKRLTLESAVHPEAPSMHPKIEKVNHQGISHFPGAFPPQSARGCSIVQDCRADAENRLLSSSFELQDGMTSIITDANRETDTMAIPLLRYSGADLTTENTLATSNCLGESGTFNPLNNISVNPSQGATFVKVYKSGSLGRSLDISRFSSYCELRSELERLFGLEGQLEDPVRSGWQLVFVDRENDILLVGDDPWQEFANSVWCIKILSPQEVQQLVRGGDGLLSSPGARMQQSNACDDYSASHNMQNIAGNIASVAPLDY.

Residues Met-1–Gly-20 are disordered. A DNA-binding region (TF-B3) is located at residues Phe-132–Asn-234. Residues Arg-546–Ser-564 show a composition bias toward low complexity. The tract at residues Arg-546–Leu-586 is disordered. Polar residues predominate over residues Glu-575–Leu-586. A PB1 domain is found at Ala-766–Glu-850.

The protein belongs to the ARF family. In terms of assembly, homodimers and heterodimers. Expressed in roots, culms, leaves and young panicles.

It localises to the nucleus. Auxin response factors (ARFs) are transcriptional factors that bind specifically to the DNA sequence 5'-TGTCTC-3' found in the auxin-responsive promoter elements (AuxREs). This chain is Auxin response factor 25 (ARF25), found in Oryza sativa subsp. japonica (Rice).